The primary structure comprises 153 residues: Hydrogenase expression/formation protein HoxT (153 aa).

This sequence belongs to the HupJ family.

The sequence is that of Hydrogenase expression/formation protein HoxT (hoxT) from Azotobacter vinelandii.